Consider the following 863-residue polypeptide: DNA mismatch repair protein MutS (863 aa).

Position 607-614 (607-614) interacts with ATP; the sequence is GPNMAGKS.

This sequence belongs to the DNA mismatch repair MutS family.

Its function is as follows. This protein is involved in the repair of mismatches in DNA. It is possible that it carries out the mismatch recognition step. This protein has a weak ATPase activity. This chain is DNA mismatch repair protein MutS, found in Caldicellulosiruptor saccharolyticus (strain ATCC 43494 / DSM 8903 / Tp8T 6331).